The chain runs to 503 residues: ESX-5 secretion system protein EccD5 (503 aa).

10 helical membrane-spanning segments follow: residues 137–157 (VVAVQVGAGMVGTGVILASGV), 169–189 (LTTIFASVIAVLVLMVAMMLL), 200–220 (VADIMLVSGLAPLTVAAASAP), 224–244 (VGSPQAVLGFGVLSIAAALAL), 250–270 (RLAIYTAIVTICGLTTLASLS), 272–292 (MVAATSAVTLFATMLLICVVM), 359–379 (FLSGLLVGLGVLMVVSLTSLC), 414–434 (ITLAVTAVIVVAAVSVRYALV), 443–463 (IVASLLVLLPAAGMTAAAVVP), and 480–500 (YLCLMPIFPLAFWLMNVYAAI).

It belongs to the EccD/Snm4 family. As to quaternary structure, part of the ESX-5 / type VII secretion system (T7SS), which is composed of cytosolic and membrane components. The ESX-5 membrane complex is composed of EccB5, EccC5, EccD5 and EccE5.

It localises to the cell inner membrane. Part of the ESX-5 specialized secretion system, which is responsible for the secretion of EsxN and a number of PE_PGRS and PPE proteins. This component is essential for ESX-5 complex stability and secretion. The protein is ESX-5 secretion system protein EccD5 of Mycobacterium marinum (strain ATCC BAA-535 / M).